A 243-amino-acid polypeptide reads, in one-letter code: Ras-related protein Rab-12 (243 aa).

Residue M1 is modified to N-acetylmethionine. The interval 1–36 is disordered; sequence MDPSAALHRRPAGGSLGAVSPALSGGQARRRKQPPR. Phosphoserine occurs at positions 15, 20, and 24. GTP-binding residues include G51, V52, G53, K54, T55, S72, and T73. T55 is a binding site for Mg(2+). 2 short sequence motifs (switch) span residues 64–78 and 96–113; these read DTFC…GVDF and DTAG…YYRS. T73 and D96 together coordinate Mg(2+). GTP is bound at residue G99. S105 is modified (phosphoserine; by LRRK2). N154, K155, D157, S185, A186, and K187 together coordinate GTP. S-geranylgeranyl cysteine attachment occurs at residues C242 and C243.

This sequence belongs to the small GTPase superfamily. Rab family. In terms of assembly, interacts with RABIF and OPTN. Interacts with LRRK2; interaction facilitates phosphorylation of Ser-105. Interacts with GDI1, GDI2, CHM and CHML; these interactions are disrupted by phosphorylation on Ser-105. Interacts with RILPL1 and RILPL2; these interactions are dependent on phosphorylation of Ser-105. Mg(2+) serves as cofactor. Phosphorylation of Ser-105 in the switch II region by LRRK2 prevents the association of RAB regulatory proteins, including CHM, CHML and RAB GDP dissociation inhibitors GDI1 and GDI2. Ubiquitously expressed.

It localises to the recycling endosome membrane. It is found in the lysosome membrane. The protein localises to the golgi apparatus membrane. Its subcellular location is the cytoplasmic vesicle. The protein resides in the autophagosome. It catalyses the reaction GTP + H2O = GDP + phosphate + H(+). With respect to regulation, regulated by guanine nucleotide exchange factors (GEFs) including DENND3 which promote the exchange of bound GDP for free GTP. Regulated by GTPase activating proteins (GAPs) which increase the GTP hydrolysis activity. Inhibited by GDP dissociation inhibitors (GDIs). Its function is as follows. The small GTPases Rab are key regulators of intracellular membrane trafficking, from the formation of transport vesicles to their fusion with membranes. Rabs cycle between an inactive GDP-bound form and an active GTP-bound form that is able to recruit to membranes different set of downstream effectors directly responsible for vesicle formation, movement, tethering and fusion. RAB12 may play a role in protein transport from recycling endosomes to lysosomes regulating, for instance, the degradation of the transferrin receptor. Involved in autophagy. The protein is Ras-related protein Rab-12 of Mus musculus (Mouse).